Reading from the N-terminus, the 1257-residue chain is LIM domain kinase 1 (1257 aa).

Residues 1 to 24 (MHHQQRLRANGGRGGTGLGAGSGP) form a disordered region. The segment at 1–147 (MHHQQRLRAN…ERSKLYCGQC (147 aa)) is interaction with LATS1. A compositionally biased stretch (gly residues) spans 11–24 (GGRGGTGLGAGSGP). LIM zinc-binding domains lie at 31–93 (PLCA…RFGD) and 94–154 (ACQQ…RSCQ). The 101-residue stretch at 174–274 (LVEIPKDATP…MLQLTVEHDP (101 aa)) folds into the PDZ domain. The 286-residue stretch at 401–686 (LVIGEKLGEG…PCFETLHVWL (286 aa)) folds into the Protein kinase domain. ATP contacts are provided by residues 407–415 (LGEGFFGKV) and Lys430. The active site involves Asp522. Disordered stretches follow at residues 552–587 (LPSG…RQRR), 759–811 (QDIP…ERAL), and 881–900 (EELL…QHHR). Basic and acidic residues predominate over residues 794 to 811 (QEERRNLTPDTESKERAL). Ser1000 carries the post-translational modification Phosphoserine. Disordered stretches follow at residues 1010–1037 (AKQL…NPPL), 1085–1182 (SAQQ…EKVH), and 1212–1257 (AAGT…NTRC). 2 stretches are compositionally biased toward polar residues: residues 1085-1095 (SAQQQRTSSNH) and 1113-1125 (RTGS…SNCV). Composition is skewed to low complexity over residues 1126-1137 (SPTRSSRPGSPT) and 1145-1166 (TAAT…HQQQ).

This sequence belongs to the protein kinase superfamily. TKL Ser/Thr protein kinase family. As to quaternary structure, interacts with LATS1, and this interaction inhibits phosphorylation of tsr/cofilin. Phosphorylated on serine and/or threonine residues by ROCK1. Phosphorylated by PAK4 resulting in increased LIMK1 ability to phosphorylate cofilin. May be dephosphorylated and inactivated by SSH1. Expressed throughout the imaginal disks of the eye, leg and wing.

The protein resides in the cytoplasm. The protein localises to the cleavage furrow. It is found in the midbody. The enzyme catalyses L-seryl-[protein] + ATP = O-phospho-L-seryl-[protein] + ADP + H(+). It carries out the reaction L-threonyl-[protein] + ATP = O-phospho-L-threonyl-[protein] + ADP + H(+). In terms of biological role, protein kinase which regulates actin filament dynamics. Phosphorylates and inactivates the actin binding/depolymerizing factor tsr/cofilin, thereby stabilizing the actin cytoskeleton. Modulation of actin cytoskeleton dynamics may be essential for imaginal disk morphogenesis and axon guidance. The sequence is that of LIM domain kinase 1 (LIMK1) from Drosophila melanogaster (Fruit fly).